Here is a 192-residue protein sequence, read N- to C-terminus: T-cell surface glycoprotein CD3 epsilon chain (192 aa).

The first 21 residues, 1–21, serve as a signal peptide directing secretion; it reads MQSGNLWRALGLCLLLVGAWA. The Extracellular portion of the chain corresponds to 23–114; that stretch reads DADEQKPYEV…QNCMEVNLME (92 aa). One can recognise an Ig-like domain in the interval 26–97; the sequence is EQKPYEVSIS…EGNKEAAHTL (72 aa). Cysteine 43 and cysteine 84 are oxidised to a cystine. N-linked (GlcNAc...) asparagine glycosylation is present at asparagine 72. A helical membrane pass occupies residues 115 to 135; it reads VATIIVVDICVTLGLLLLVYY. Topologically, residues 136 to 192 are cytoplasmic; the sequence is WSKSRKAKASPMTRGAGAGGRPRGQNKGRPPPVPNPDYEPIRKGQRDLYAGLNQRGV. The segment at 145-180 is disordered; the sequence is SPMTRGAGAGGRPRGQNKGRPPPVPNPDYEPIRKGQ. Positions 160–177 are NUMB-binding region; it reads QNKGRPPPVPNPDYEPIR. Residues 163–190 form the ITAM domain; that stretch reads GRPPPVPNPDYEPIRKGQRDLYAGLNQR. The tract at residues 164–171 is proline-rich sequence; the sequence is RPPPVPNP. 2 positions are modified to phosphotyrosine: tyrosine 173 and tyrosine 184.

As to quaternary structure, the TCR-CD3 complex is composed of a CD3D/CD3E and a CD3G/CD3E heterodimers that preferentially associate with TCRalpha and TCRbeta, respectively, to form TCRalpha/CD3E/CD3G and TCRbeta/CD3G/CD3E trimers. In turn, the hexamer interacts with CD3Z homodimer to form the TCR-CD3 complex. Alternatively, TCRalpha and TCRbeta can be replaced by TCRgamma and TCRdelta. Interacts with CD6. Interacts (via Proline-rich sequence) with NCK1; the interaction is ligand dependent but independent of tyrosine kinase activation. In terms of processing, phosphorylated on Tyr residues after T-cell receptor triggering by LCK in association with CD4/CD8.

The protein localises to the cell membrane. Functionally, part of the TCR-CD3 complex present on T-lymphocyte cell surface that plays an essential role in adaptive immune response. When antigen presenting cells (APCs) activate T-cell receptor (TCR), TCR-mediated signals are transmitted across the cell membrane by the CD3 chains CD3D, CD3E, CD3G and CD3Z. All CD3 chains contain immunoreceptor tyrosine-based activation motifs (ITAMs) in their cytoplasmic domain. Upon TCR engagement, these motifs become phosphorylated by Src family protein tyrosine kinases LCK and FYN, resulting in the activation of downstream signaling pathways. In addition of this role of signal transduction in T-cell activation, CD3E plays an essential role in correct T-cell development. Also participates in internalization and cell surface down-regulation of TCR-CD3 complexes via endocytosis sequences present in CD3E cytosolic region. In addition to its role as a TCR coreceptor, it serves as a receptor for ITPRIPL1. Ligand recognition inhibits T-cell activation by promoting interaction with NCK1, which prevents CD3E-ZAP70 interaction and blocks the ERK-NFkB signaling cascade and calcium influx. The sequence is that of T-cell surface glycoprotein CD3 epsilon chain (CD3E) from Bos taurus (Bovine).